The sequence spans 310 residues: UDP-N-acetylenolpyruvoylglucosamine reductase (310 aa).

The FAD-binding PCMH-type domain occupies 27 to 192; it reads KIGGKARYIV…LKATFRLQYA (166 aa). The active site involves arginine 171. Serine 223 functions as the Proton donor in the catalytic mechanism. The active site involves glutamate 293.

The protein belongs to the MurB family. FAD is required as a cofactor.

It is found in the cytoplasm. The catalysed reaction is UDP-N-acetyl-alpha-D-muramate + NADP(+) = UDP-N-acetyl-3-O-(1-carboxyvinyl)-alpha-D-glucosamine + NADPH + H(+). It functions in the pathway cell wall biogenesis; peptidoglycan biosynthesis. In terms of biological role, cell wall formation. The protein is UDP-N-acetylenolpyruvoylglucosamine reductase of Caldicellulosiruptor saccharolyticus (strain ATCC 43494 / DSM 8903 / Tp8T 6331).